The primary structure comprises 160 residues: MAIATADLFDSHEDILESCETQFRSYGGRAAFHGPIRTVRCHQDNALLKSLLSTPGDGAVLVVDGGGSLRTALVGDLIAGLGVKNGWAGIVVHGAIRDSEAIGGLDIGLKALGSNPRKSTKTGAGEADRPVAFGGCTFTPGHWLYSDADGVVVAPRRLHD.

Substrate-binding positions include 75–78 (GDLI) and R97. D98 provides a ligand contact to a divalent metal cation.

Belongs to the class II aldolase/RraA-like family. As to quaternary structure, homotrimer. A divalent metal cation is required as a cofactor.

The enzyme catalyses 4-hydroxy-4-methyl-2-oxoglutarate = 2 pyruvate. It carries out the reaction oxaloacetate + H(+) = pyruvate + CO2. In terms of biological role, catalyzes the aldol cleavage of 4-hydroxy-4-methyl-2-oxoglutarate (HMG) into 2 molecules of pyruvate. Also contains a secondary oxaloacetate (OAA) decarboxylase activity due to the common pyruvate enolate transition state formed following C-C bond cleavage in the retro-aldol and decarboxylation reactions. This chain is Putative 4-hydroxy-4-methyl-2-oxoglutarate aldolase, found in Rhodospirillum centenum (strain ATCC 51521 / SW).